The chain runs to 303 residues: UDP-3-O-acyl-N-acetylglucosamine deacetylase (303 aa).

Zn(2+)-binding residues include H78, H237, and D241. The active-site Proton donor is the H264.

The protein belongs to the LpxC family. Zn(2+) serves as cofactor.

It carries out the reaction a UDP-3-O-[(3R)-3-hydroxyacyl]-N-acetyl-alpha-D-glucosamine + H2O = a UDP-3-O-[(3R)-3-hydroxyacyl]-alpha-D-glucosamine + acetate. It functions in the pathway glycolipid biosynthesis; lipid IV(A) biosynthesis; lipid IV(A) from (3R)-3-hydroxytetradecanoyl-[acyl-carrier-protein] and UDP-N-acetyl-alpha-D-glucosamine: step 2/6. Its function is as follows. Catalyzes the hydrolysis of UDP-3-O-myristoyl-N-acetylglucosamine to form UDP-3-O-myristoylglucosamine and acetate, the committed step in lipid A biosynthesis. This is UDP-3-O-acyl-N-acetylglucosamine deacetylase from Teredinibacter turnerae (strain ATCC 39867 / T7901).